Reading from the N-terminus, the 145-residue chain is Selenoprotein M (145 aa).

A signal peptide spans 1–23; the sequence is MSILLSPPSLLLLLAALVAPATS. Catalysis depends on nucleophile residues cysteine 45 and selenocysteine 48. A cross-link (cysteinyl-selenocysteine (Cys-Sec)) is located at residues 45 to 48; sequence CGGU. A non-standard amino acid (selenocysteine) is located at residue selenocysteine 48. The interval 125-145 is disordered; sequence PPEYLWAPAKPPEEASEHDDL.

Belongs to the selenoprotein M/F family. In terms of tissue distribution, widely expressed. Highly expressed in brain.

It is found in the cytoplasm. The protein resides in the perinuclear region. It localises to the endoplasmic reticulum. Its subcellular location is the golgi apparatus. In terms of biological role, may function as a thiol-disulfide oxidoreductase that participates in disulfide bond formation. This is Selenoprotein M from Mus musculus (Mouse).